Here is a 1007-residue protein sequence, read N- to C-terminus: Mediator of RNA polymerase II transcription subunit 5 (1007 aa).

It belongs to the Mediator complex subunit 5 family. As to quaternary structure, component of the Mediator complex.

It is found in the nucleus. In terms of biological role, component of the Mediator complex, a coactivator involved in the regulated transcription of nearly all RNA polymerase II-dependent genes. Mediator functions as a bridge to convey information from gene-specific regulatory proteins to the basal RNA polymerase II transcription machinery. Mediator is recruited to promoters by direct interactions with regulatory proteins and serves as a scaffold for the assembly of a functional preinitiation complex with RNA polymerase II and the general transcription factors. This chain is Mediator of RNA polymerase II transcription subunit 5 (nut1), found in Aspergillus fumigatus (strain ATCC MYA-4609 / CBS 101355 / FGSC A1100 / Af293) (Neosartorya fumigata).